A 138-amino-acid chain; its full sequence is 2-amino-3-carboxymuconate-6-semialdehyde decarboxylase (138 aa).

2 residues coordinate Zn(2+): H6 and H8. R47 lines the substrate pocket. H70 and D126 together coordinate Zn(2+).

It belongs to the metallo-dependent hydrolases superfamily. ACMSD family. In terms of assembly, monomer.

It catalyses the reaction 2-amino-3-carboxymuconate 6-semialdehyde + H(+) = 2-aminomuconate 6-semialdehyde + CO2. The protein operates within secondary metabolite metabolism; quinolate metabolism. In terms of biological role, converts alpha-amino-beta-carboxymuconate-epsilon-semialdehyde (ACMS) to alpha-aminomuconate semialdehyde (AMS). ACMS can be converted non-enzymatically to quinolate (QA), a key precursor of NAD, and a potent endogenous excitotoxin of neuronal cells which is implicated in the pathogenesis of various neurodegenerative disorders. In the presence of ACMSD, ACMS is converted to AMS, a benign catabolite. ACMSD ultimately controls the metabolic fate of tryptophan catabolism along the kynurenine pathway. The sequence is that of 2-amino-3-carboxymuconate-6-semialdehyde decarboxylase (ACMSD) from Sus scrofa (Pig).